We begin with the raw amino-acid sequence, 605 residues long: Glucose oxidase (605 aa).

An N-terminal signal peptide occupies residues 1-16; sequence MQTLLVSSLVVSLAAA. Residues Leu51 and Thr52 each coordinate FAD. Asn65 carries an N-linked (GlcNAc...) asparagine glycan. Glu72 is an FAD binding site. N-linked (GlcNAc...) asparagine glycosylation occurs at Asn111. Positions 125, 129, 130, and 132 each coordinate FAD. 2 N-linked (GlcNAc...) asparagine glycosylation sites follow: Asn183 and Asn190. Cys186 and Cys228 form a disulfide bridge. Position 272 (Val272) interacts with FAD. N-linked (GlcNAc...) asparagine glycosylation is found at Asn280, Asn377, Asn410, and Asn495. Residue His538 is the Proton acceptor of the active site. O2 is bound by residues Arg559 and Val560. Positions 571 and 583 each coordinate FAD.

Belongs to the GMC oxidoreductase family. Homodimer. Requires FAD as cofactor. In terms of processing, the N-linked sugar chains of the glucose oxidase contributed to the high solubility of the enzyme in water.

The protein resides in the secreted. Its subcellular location is the cell wall. It is found in the cytoplasm. The protein localises to the extracellular space. It localises to the extracellular matrix. It carries out the reaction beta-D-glucose + O2 = D-glucono-1,5-lactone + H2O2. Its function is as follows. Glucose oxidase catalyzes the oxidation of beta-D-glucose to D-glucono-delta-lactone and hydrogen peroxide in the presence of molecular oxygen. D-glucono-delta-lactone is sequentially hydrolyzed by lactonase to D-gluconic acid, and the resulting hydrogen peroxide is hydrolyzed by catalase to oxygen and water. The activity shows high specificity to beta-D-glucose, with very low to no activity towards L-glucose, 2-deoxy-D-glucose, 3-deoxy-D-glucose, 4-deoxy-D-glucose, 5-deoxy-D-glucose, 6-deoxy-D-glucose, 3-O-methyl-D-glucose, 4-O-methyl-D-glucose, 6-O-methyl-D-glucose, 4,6-O-benzylidene-D-glucose, 5-thio-5-deoxy-D-glucose, D-mannose, D-allose, D-galactose, D-fructose, D-arabinose, D-xylose, trehalose, melibiose, L-mannomethylose, lactose, sucrose or 1,5-anhydro-D-glucitol. The polypeptide is Glucose oxidase (Aspergillus niger).